The following is a 594-amino-acid chain: Adenine deaminase 1 (594 aa).

It belongs to the metallo-dependent hydrolases superfamily. Adenine deaminase family. The cofactor is Mn(2+).

The catalysed reaction is adenine + H2O + H(+) = hypoxanthine + NH4(+). This is Adenine deaminase 1 from Desulfotalea psychrophila (strain LSv54 / DSM 12343).